The primary structure comprises 512 residues: MDGSGTGSRSGVESILPNYKLGRTLGIGSFGRVKIAEHALTGHKVAIKILNRRKIKNMEMEEKVRREIKILRLFMHPHIIRLYEVIETPTDIYLVMEYVNSGELFDYIVEKGRLQEDEARNFFQQIISGVEYCHRNMVVHRDLKPENLLLDSKCNVKIADFGLSNIMRDGHFLKTSCGSPNYAAPEVISGKLYAGPEVDVWSCGVILYALLCGTLPFDDENIPNLFKKIKGGIYTLPSHLSPGARDLIPRMLVVDPMKRVTIPEIRQHPWFQAHLPRYLAVPPPDTVQQAKKIDEEILQEVINMGFDRNHLIESLRNRTQNDGTVTYYLILDNRFRASSGYLGAEFQETMEGTPRMHPAESVASPVSHRLPGLMEYQGVGLRSQYPVERKWALGLQSRAHPREIMTEVLKALQDLNVCWKKIGHYNMKCRWVPNSSADGMLSNSMHDNNYFGDESSIIENEAAVKSPNVVKFEIQLYKTRDDKYLLDLQRVQGPQFLFLDLCAAFLAQLRVL.

The region spanning 19 to 271 (YKLGRTLGIG…IPEIRQHPWF (253 aa)) is the Protein kinase domain. K20 is covalently cross-linked (Glycyl lysine isopeptide (Lys-Gly) (interchain with G-Cter in ubiquitin)). 25 to 33 (LGIGSFGRV) serves as a coordination point for ATP. K34 is covalently cross-linked (Glycyl lysine isopeptide (Lys-Gly) (interchain with G-Cter in SUMO)). K48 serves as a coordination point for ATP. A Glycyl lysine isopeptide (Lys-Gly) (interchain with G-Cter in SUMO) cross-link involves residue K63. The Proton acceptor role is filled by D142. S164 bears the Phosphoserine mark. A Phosphothreonine; by GRIK1 or GRIK2 modification is found at T175. The tract at residues 290–389 (AKKIDEEILQ…GLRSQYPVER (100 aa)) is auto-inhibitory domain (AID). A UBA domain is found at 292–332 (KIDEEILQEVINMGFDRNHLIESLRNRTQNDGTVTYYLILD). Residues 294-512 (DEEILQEVIN…AAFLAQLRVL (219 aa)) form a regulatory domain (RD) region. The residue at position 364 (S364) is a Phosphoserine. K390 participates in a covalent cross-link: Glycyl lysine isopeptide (Lys-Gly) (interchain with G-Cter in SUMO). The segment at 390–512 (KWALGLQSRA…AAFLAQLRVL (123 aa)) is PPI. In terms of domain architecture, KA1 spans 463–511 (AVKSPNVVKFEIQLYKTRDDKYLLDLQRVQGPQFLFLDLCAAFLAQLRV).

Belongs to the protein kinase superfamily. CAMK Ser/Thr protein kinase family. SNF1 subfamily. In terms of assembly, subunit of a probable heterotrimeric complex consisting of an alpha catalytic (KIN10 or KIN11) subunit, and a beta (KINB) and a gamma (KING or SNF4) non-catalytic regulatory subunits. Interacts with KINB2, KINB3, SNF4 and probably with KINB1 and KING1. Interacts with SKP1/ASK1, PAD1, the N-terminus of PRL1 and the WD40 domain of 5PTase13. Potential subunit of a SCF ubiquitin ligase complex consisting of a SNF1-related protein kinase, SKP1 and CUL1. The association of the SCF complex with the proteasome may be mediated by PAD1 and seems to be inhibited by the interaction with PRL1. Interacts with ATAF1. Interacts with ESD4. Interacts with SCE1. Interacts with FUS3. Interacts with PP2C74. Interacts with CDKE1. Interacts with ABI1 and PP2CA. Interacts with KRP6. Interacts with CIPK14. Interacts with FLZ proteins through their FLZ-type zinc finger domains. Interacts with GEBP/STKR1. Interacts with MYC2. Interacts with IDD8. Interacts with BZIP63. Interacts with PTL. Interacts with FLZ3, FLZ9, TCP3, TCP13, HB21/ZHD3 and HB23/ZHD10. Interacts with PTP1. Interacts with RAPTOR1B. Forms oligomers in vitro under strongly reducing conditions. Interacts with WRI1. Interacts with EIN3. Component of a ternary complex composed of BZIP2-BZIP63 heterodimer and KIN10. Interacts with IPK2b. Interacts with FLZ6 and FLZ10. Phosphorylated at Thr-175 in response to glucose. Phosphorylated at Thr-175 under submergence. Autophosphorylated. Dephosphorylated at Thr-175 by ABI1 and PP2CA. Post-translationally, ubiquitinated. Degradation is mediated by a CUL4-based E3 ligase that uses PRL1 as a substrate receptor. In terms of processing, sumoylated by SIZ1. Sumoylated SnRK1 is ubiquitinated and degraded by the proteasome. As to expression, isoform 2 is widely expressed, especially in newly developing tissues. Isoform 2 is expressed throughout the seedling, with highest expression in leaf primordia and vascular tissue, and the seedling root tip. Isoform 2 is later expressed in developing lateral root primordia and developing embryos within siliques. Isoform 1 is widely expressed but at very low levels.

It localises to the plastid. It is found in the chloroplast. The protein resides in the cytoplasm. The protein localises to the nucleus. Its subcellular location is the golgi apparatus. It localises to the endoplasmic reticulum. It catalyses the reaction L-seryl-[protein] + ATP = O-phospho-L-seryl-[protein] + ADP + H(+). The enzyme catalyses L-threonyl-[protein] + ATP = O-phospho-L-threonyl-[protein] + ADP + H(+). Its activity is regulated as follows. Activated by phosphorylation at Thr-175 by GRIK1/SNAK2 and GRIK2/SNAK1. Inactivated by dephosphorylation at Thr-175. Inhibited by trehalose-6-phosphate. Down-regulated by SR45 by affecting its stability. Reduced kinase activity in response to H(2)O(2) treatment. The redox-state of Cys-177 seems to directly influence its kinase activity. Down-regulated by FLZ6 and FLZ10. Functionally, catalytic subunit of the probable trimeric SNF1-related protein kinase (SnRK) complex, a central regulator of cellular energy homeostasis, which, in response to seemingly unrelated darkness, sugar and stress conditions, activates energy-producing pathways and inhibits energy-consuming processes. May play a role in a signal transduction cascade regulating gene expression and carbohydrate metabolism in higher plants. The SnRK complex may also be involved in the regulation of fatty acid synthesis by phosphorylation of acetyl-CoA carboxylase and in assimilation of nitrogen by phosphorylating nitrate reductase. In vitro, KIN10 exhibits kinase activity on sucrose phosphate synthase and the kinase activity is inhibited by PRL1. May be a subunit of a SCF ubiquitin ligase complex and thus be involved in proteasomal ubiquitination. Phosphorylates GRIK1/SNAK2 and GRIK2/SNAK1 in vitro. Cooperates with FUS3 to regulate developmental phase transitions and lateral organ development and act both as positive regulators of abscisic acid (ABA) signaling during germination. Phosphorylates FUS3 in embryo. Negatively modulates MYC2 accumulation through its protein phosphorylation. Phosphorylates geminivirus (CaLCuV, TGMV, ToMoV) AL2 protein resulting in a delay in the viral DNA accumulation and symptom appearance during infection. Regulates bZIP63 activity to alter metabolism in response to starvation through its protein phosphorylation. Under sugar deprivation conditions, antagonizes the IDD8 function in flowering time control by its protein phosphorylation. Plays a cardinal role in the control of cell proliferation through inhibition of KRP6 activity by its protein phosphorylation. Under submergence, phosphorylates PTP1, leading to the release of the MPK6 signaling pathway inhibition. Triggers its own SUMO-mediated proteasomal degradation, establishing a negative feedback loop that attenuates SnRK1 signaling and prevents detrimental hyperactivation of stress responses. Phosphorylates RAPTOR1B in vitro. Phosphorylates and down-regulates HMGR1S in vitro. Kinase activity is redox-sensitive. Acts upstream of TOR in the regulation of autophagy. Required for the activation of autophagy by many abiotic stresses. Involved in positive regulation of autophagy, possibly by affecting the phosphorylation of ATG1 proteins. Negatively modulates WRI1 accumulation through its protein phosphorylation. Modulates leaf senescence progression by the negative regulation of EIN3 accumulation through its protein phosphorylation. Under extended darkness, C/S1-bZIP-SnRK1 complex interacts with the histone acetylation machinery to remodel chromatin and facilitate transcription. BZIP2-BZIP63-KIN10 complex binds to the ETFQO promoter to up-regulate its transcription. Phosphorylates and down-regulates IPK2b in vitro. Involved in the regulation of sucrose-induced hypocotyl elongation under light/dark cycles. The chain is SNF1-related protein kinase catalytic subunit alpha KIN10 from Arabidopsis thaliana (Mouse-ear cress).